Consider the following 1247-residue polypeptide: MRARGWGRLPRRLLLLLVLCVQATRPMGYFELQLSALRNVNGELLSGACCDGDGRTTRAGGCGRDECDTYVRVCLKEYQAKVTPTGPCSYGYGATPVLGGNSFYLPPAGAAGDRARARSRTGGHQDPGLVVIPFQFAWPRSFTLIVEAWDWDNDTTPDEELLIERVSHAGMINPEDRWKSLHFSGHVAHLELQIRVRCDENYYSATCNKFCRPRNDFFGHYTCDQYGNKACMDGWMGKECKEAVCKQGCNLLHGGCTVPGECRCSYGWQGKFCDECVPYPGCVHGSCVEPWHCDCETNWGGLLCDKDLNYCGSHHPCVNGGTCINAEPDQYLCACPDGYLGKNCERAEHACASNPCANGGSCHEVPSGFECHCPSGWNGPTCALDIDECASNPCAAGGTCVDQVDGFECICPEQWVGATCQLDANECEGKPCLNAFSCKNLIGGYYCDCLPGWKGINCQININDCHGQCQHGGTCKDLVNGYQCVCPRGFGGRHCELEYDKCASSPCRRGGICEDLVDGFRCHCPRGLSGLHCEVDMDLCEPSPCLNGARCYNLEGDYYCACPEDFGGKNCSVPRDTCPGGACRVIDGCGFEAGSRARGVAPSGICGPHGHCVSLPGGNFSCICDSGFTGTYCHENIDDCMGQPCRNGGTCIDEVDSFRCFCPSGWEGELCDINPNDCLPDPCHSRGRCYDLVNDFYCACDDGWKGKTCHSREFQCDAYTCSNGGTCYDSGDTFRCACPPGWKGSTCTIAKNSSCVPNPCVNGGTCVGSGDSFSCICRDGWEGRTCTHNTNDCNPLPCYNGGICVDGVNWFRCECAPGFAGPDCRINIDECQSSPCAYGATCVDEINGYRCSCPPGRSGPRCQEVVIFTRPCWSRGMSFPHGSSWMEDCNSCRCLDGHRDCSKVWCGWKPCLLSGQPSDPSAQCPPGQQCQEKAVGQCLQPPCENWGECTAEEPLPPSTPCQPRSSHLDNNCARLTLRFNRDQVPQGTTVGAICSGIRALPATRAAAHDRLLLLLCDRASSGASAVEVAVSFSPARDLPDSSLIQSTAHAIVAAITQRGNSSLLLAVTEVKVETVVMGGSSTGLLVPVLCSVFSVLWLACVVICVWWTRKRRKERERSRLPRDESANNQWAPLNPIRNPIERPGGSGLGTGGHKDILYQCKNFTPPPRRAGEALPGPAGHGAGGEDEEDEELSRGDGDSPEAEKFISHKFTKDPSCSLGRPARWAPGPKVDNRAVRSTKDVRRAGRE.

The N-terminal stretch at 1–23 (MRARGWGRLPRRLLLLLVLCVQA) is a signal peptide. The Extracellular portion of the chain corresponds to 24 to 1082 (TRPMGYFELQ…ETVVMGGSST (1059 aa)). Asparagine 153 is a glycosylation site (N-linked (GlcNAc...) asparagine). In terms of domain architecture, DSL spans 196 to 240 (VRCDENYYSATCNKFCRPRNDFFGHYTCDQYGNKACMDGWMGKEC). 42 cysteine pairs are disulfide-bonded: cysteine 198–cysteine 207, cysteine 211–cysteine 223, cysteine 231–cysteine 240, cysteine 245–cysteine 256, cysteine 249–cysteine 262, cysteine 264–cysteine 273, cysteine 276–cysteine 287, cysteine 282–cysteine 293, cysteine 295–cysteine 304, cysteine 311–cysteine 323, cysteine 317–cysteine 333, cysteine 335–cysteine 344, cysteine 351–cysteine 362, cysteine 356–cysteine 371, cysteine 373–cysteine 382, cysteine 389–cysteine 400, cysteine 394–cysteine 409, cysteine 411–cysteine 420, cysteine 427–cysteine 438, cysteine 432–cysteine 447, cysteine 449–cysteine 458, cysteine 465–cysteine 475, cysteine 469–cysteine 484, cysteine 486–cysteine 495, cysteine 502–cysteine 513, cysteine 507–cysteine 522, cysteine 524–cysteine 533, cysteine 540–cysteine 551, cysteine 545–cysteine 560, cysteine 562–cysteine 571, cysteine 589–cysteine 612, cysteine 606–cysteine 622, cysteine 624–cysteine 633, cysteine 640–cysteine 651, cysteine 645–cysteine 660, cysteine 662–cysteine 671, cysteine 678–cysteine 689, cysteine 683–cysteine 698, cysteine 700–cysteine 709, cysteine 716–cysteine 727, cysteine 721–cysteine 736, and cysteine 738–cysteine 747. Residues 241-274 (KEAVCKQGCNLLHGGCTVPGECRCSYGWQGKFCD) enclose the EGF-like 1 domain. The EGF-like 2; atypical domain maps to 275-305 (ECVPYPGCVHGSCVEPWHCDCETNWGGLLCD). EGF-like domains are found at residues 307–345 (DLNY…KNCE) and 347–383 (AEHA…PTCA). The region spanning 385 to 421 (DIDECASNPCAAGGTCVDQVDGFECICPEQWVGATCQ) is the EGF-like 5; calcium-binding domain. One can recognise an EGF-like 6; calcium-binding domain in the interval 423 to 459 (DANECEGKPCLNAFSCKNLIGGYYCDCLPGWKGINCQ). In terms of domain architecture, EGF-like 7; calcium-binding spans 461-496 (NINDCHGQCQHGGTCKDLVNGYQCVCPRGFGGRHCE). 2 consecutive EGF-like domains span residues 498 to 534 (EYDK…LHCE) and 536 to 572 (DMDL…KNCS). N-linked (GlcNAc...) asparagine glycosylation occurs at asparagine 570. In terms of domain architecture, EGF-like 10; atypical spans 574–634 (PRDTCPGGAC…DSGFTGTYCH (61 aa)). Asparagine 619 carries N-linked (GlcNAc...) asparagine glycosylation. The 37-residue stretch at 636 to 672 (NIDDCMGQPCRNGGTCIDEVDSFRCFCPSGWEGELCD) folds into the EGF-like 11; calcium-binding domain. In terms of domain architecture, EGF-like 12; calcium-binding spans 674–710 (NPNDCLPDPCHSRGRCYDLVNDFYCACDDGWKGKTCH). 2 consecutive EGF-like domains span residues 712–748 (REFQ…STCT) and 751–787 (KNSS…RTCT). Asparagine 752 is a glycosylation site (N-linked (GlcNAc...) asparagine). Disulfide bonds link cysteine 755/cysteine 766, cysteine 760/cysteine 775, cysteine 777/cysteine 786, cysteine 793/cysteine 804, cysteine 798/cysteine 813, cysteine 815/cysteine 824, cysteine 831/cysteine 842, cysteine 836/cysteine 851, and cysteine 853/cysteine 862. Residues 789-825 (NTNDCNPLPCYNGGICVDGVNWFRCECAPGFAGPDCR) enclose the EGF-like 15; calcium-binding domain. In terms of domain architecture, EGF-like 16; calcium-binding spans 827–863 (NIDECQSSPCAYGATCVDEINGYRCSCPPGRSGPRCQ). The N-linked (GlcNAc...) asparagine glycan is linked to asparagine 1060. Residues 1083–1103 (GLLVPVLCSVFSVLWLACVVI) traverse the membrane as a helical segment. Residues 1104–1247 (CVWWTRKRRK…TKDVRRAGRE (144 aa)) are Cytoplasmic-facing. Basic and acidic residues-rich tracts occupy residues 1115–1125 (RERSRLPRDES), 1192–1212 (LSRG…KFTK), and 1230–1247 (VDNR…AGRE). Disordered regions lie at residues 1115-1148 (RERS…GSGL) and 1167-1247 (PRRA…AGRE). Serine 1125 bears the Phosphoserine mark.

In terms of tissue distribution, found to be highest in fetal thymus, epidermis, foregut dorsal root ganglia and inner ear. In 2-weeK-old mice, abundant in heart, lung, thymus, skeletal muscle, brain and testis. Expression overlaps partially with Notch1 expression.

It localises to the membrane. Putative Notch ligand involved in the mediation of Notch signaling. Plays an essential role during limb, craniofacial and thymic development. May be involved in myogenesis and in the development of peripheral and central nervous systems. This Mus musculus (Mouse) protein is Protein jagged-2 (Jag2).